The primary structure comprises 1036 residues: Nitrogen catabolic enzyme regulatory protein (1036 aa).

The segment covering 1–17 (MAASTTTPTATTRPFFT) has biased composition (low complexity). 7 disordered regions span residues 1 to 126 (MAAS…HTQS), 207 to 240 (TDRT…SQGS), 256 to 298 (TPAG…QSQH), 318 to 351 (GYLP…HVSA), 590 to 743 (SSQG…PTTC), 792 to 976 (RGSG…PTTQ), and 1000 to 1028 (GMPN…TGAE). Basic and acidic residues predominate over residues 23–34 (TEHDFRFPRRPG). A compositionally biased stretch (low complexity) spans 45-56 (AAMSSSSANNNH). 3 consecutive repeat copies span residues 49-55 (SSSANNN), 87-92 (SSSNNN), and 105-110 (SSSNNN). The tract at residues 49–110 (SSSANNNHNQ…INHQSSSNNN (62 aa)) is 3 X approximate repeats. Positions 100 to 114 (NINHQSSSNNNISKN) are enriched in low complexity. Over residues 652–661 (PRSQSQSFRQ) the composition is skewed to polar residues. Over residues 703 to 714 (SSGLSSVPASRP) the composition is skewed to low complexity. The segment covering 723 to 736 (QGSTTNLQGAAGNS) has biased composition (polar residues). The segment at 743 to 767 (CTNCFTQTTPLWRRNPDGQPLCNAC) adopts a GATA-type zinc-finger fold. Residues 802–827 (GTSTRSKKNASMSAAARKNSTLSITS) show a composition bias toward polar residues. Composition is skewed to low complexity over residues 828–861 (NANN…ASGP) and 868–899 (AGST…SAPP). Polar residues predominate over residues 927–961 (SAGSDQPVSAGAVSSSGMDVDSPANSTGSNETMPT). Residues 1000-1023 (GMPNGQAGQMMGASSSSGPGSGPS) are compositionally biased toward low complexity.

In terms of assembly, interacts with nmr.

It localises to the nucleus. Functionally, major nitrogen regulatory protein. During conditions of nitrogen limitation it turns on the expression of genes for enzymes which are required for the use of a variety of secondary nitrogen sources, including nitrates, purines, amino acids, and proteins. The polypeptide is Nitrogen catabolic enzyme regulatory protein (nit-2) (Neurospora crassa (strain ATCC 24698 / 74-OR23-1A / CBS 708.71 / DSM 1257 / FGSC 987)).